The sequence spans 174 residues: MTIGRAKVYATLSKIFYHLFYDEAIPKDCREIIEKFGEIDFNLRSVLVRELRGSVLIKDMPQSLAEVYESVMKDFYERYGFQASELHADHIAVELAFMSKLVEREISLAQQMKEEELYKIRAAQHRFIKAHLQPLVKNLPSAPLLNFVRDFVREDAKYLYSSLVGEKNEGADNN.

Belongs to the TorD/DmsD family. Monomer.

It localises to the cytoplasm. Binds specifically to the Tat signal peptide of the TtrA subunit of the tetrathionate reductase. This is Tat proofreading chaperone TtrD (ttrD) from Archaeoglobus fulgidus (strain ATCC 49558 / DSM 4304 / JCM 9628 / NBRC 100126 / VC-16).